The chain runs to 506 residues: FAD-linked oxidoreductase aurO (506 aa).

The region spanning 92–260 is the FAD-binding PCMH-type domain; that stretch reads ITAQPLAICR…AETDVRVYPM (169 aa).

It belongs to the oxygen-dependent FAD-linked oxidoreductase family. Might be part of an extracellular enzyme complex composed of GIP1, aurF, aurO and aurS. Requires FAD as cofactor.

The protein localises to the secreted. It is found in the extracellular space. It functions in the pathway pigment biosynthesis. In terms of biological role, FAD-linked oxidoreductase; part of the gene cluster that mediates the biosynthesis of aurofusarin, a red mycelium pigment which is acting as a mycotoxin. The first step is performed by the polyketide synthase which condenses one acetyl-CoA and 6 malonyl-CoA units to form the first intermediate, the cyclic heptaketide and yellow pigment YWA1. The C2 hydroxyl group in the pyrone ring of YWA1 is probably formed during ring closure by an aldol-type cyclization reaction. The dehydratase aurZ then acts as the first tailoring enzyme in the aurofusarin biosynthetic pathway by converting YWA1 to nor-rubrofusarin. Nor-rubrofusarin is then methylated to rubrofusarin by the O-methyltransferase aurJ. Rubrofusarin is then transported across the plasma membrane by the rubrofusarin-specific pump aurT for further enzymatic processing by the extracellular complex composed of GIP1, aurF, aurO and aurS to yield aurofusarin. This chain is FAD-linked oxidoreductase aurO, found in Gibberella zeae (strain ATCC MYA-4620 / CBS 123657 / FGSC 9075 / NRRL 31084 / PH-1) (Wheat head blight fungus).